A 101-amino-acid polypeptide reads, in one-letter code: Enhancer of yellow 2 transcription factor (101 aa).

It belongs to the ENY2 family. In terms of assembly, component of the nuclear pore complex (NPC)-associated TREX-2/AMEX complex (anchoring and mRNA export complex), composed of e(y)2, xmas and PCID2. Within the TREX-2/ AMEX complex, interactions with xmas is required for localization to the nuclear periphery. Component of the SAGA transcription coactivator-HAT complexes, at least composed of Ada2b, e(y)2, Pcaf/Gcn5, Taf10 and Nipped-A/Trrap. Within the SAGA complex, e(y)2, Sgf11, and not/nonstop form an additional subcomplex of SAGA called the DUB module (deubiquitination module). Component of the THO complex, composed of at least e(y)2, HPR1, THO2, THOC5, THOC6 and THOC7. Interacts with Taf9. Interacts with su(Hw) (via zinc fingers). Interacts with the nuclear pore complex (NPC). Interaction between the TREX-2/AMEX complex and the ORC complex is required for ORC localization to mRNPs, and consequently mRNA export. Within the TREX-2/AMEX-ORC complex, interacts with Orc6 and (via N-terminus or C-terminus) with Orc3. Interacts with the zinc finger protein CG9890. As to expression, ubiquitous.

Its subcellular location is the nucleus. It is found in the nucleoplasm. The protein localises to the cytoplasm. The protein resides in the nucleus membrane. Its function is as follows. Involved in mRNA export coupled transcription activation by association with both the TREX-2/AMEX and the SAGA complexes. The SAGA complex is a multiprotein complex that activates transcription by remodeling chromatin and mediating histone acetylation and deubiquitination. Within the SAGA complex, participates in a subcomplex that specifically deubiquitinates histone H2B. The SAGA complex is recruited to specific gene promoters by activators, where it is required for transcription. Required for nuclear receptor-mediated transactivation. Involved in transcription elongation by recruiting the THO complex onto nascent mRNA. The TREX-2/AMEX complex functions in docking export-competent ribonucleoprotein particles (mRNPs) to the nuclear entrance of the nuclear pore complex (nuclear basket). TREX-2/AMEX participates in mRNA export and accurate chromatin positioning in the nucleus by tethering genes to the nuclear periphery. Recruited to the su(Hw) insulators via its interaction with su(Hw) and participates in the barrier activity of such insulators. In contrast, it does not participate in the enhancer-blocking activity of the su(Hw) insulators. This Drosophila melanogaster (Fruit fly) protein is Enhancer of yellow 2 transcription factor.